Reading from the N-terminus, the 430-residue chain is Glutamate-1-semialdehyde 2,1-aminomutase (430 aa).

Residue Lys-265 is modified to N6-(pyridoxal phosphate)lysine.

The protein belongs to the class-III pyridoxal-phosphate-dependent aminotransferase family. HemL subfamily. Homodimer. Pyridoxal 5'-phosphate is required as a cofactor.

It is found in the cytoplasm. The enzyme catalyses (S)-4-amino-5-oxopentanoate = 5-aminolevulinate. It functions in the pathway porphyrin-containing compound metabolism; protoporphyrin-IX biosynthesis; 5-aminolevulinate from L-glutamyl-tRNA(Glu): step 2/2. The protein is Glutamate-1-semialdehyde 2,1-aminomutase of Helicobacter pylori (strain Shi470).